A 305-amino-acid chain; its full sequence is MNRLLKTVIENNRKWISEGKVASYIPELSKMDKNLLGISVCTLGGEEYWEGDAEVKFTIQSISKIVTLMLAIIDNGEDYVFSKVGMEPTETAFNSIVNLEAKESHKPINPMINAGAIVVASMVAGKDSDEKFDRILKFTRKISGNNNIDINLNVYTSEKETGHRNRALAYFMKSTGALKGDVEEILDVYFKQCSIEITCKDLARIGVMLANDGVSPYTGDRIVPRYVARIVKTIMVTCGMYDASGNFAVHIGIPAKSGVGGGIVACAPRRMGIGVLGTALDEKGNSIAGTKILEELSKQLDLSIF.

Substrate contacts are provided by Ser-61, Asn-113, Glu-158, Asn-165, Tyr-189, Tyr-241, and Val-259.

The protein belongs to the glutaminase family. In terms of assembly, homotetramer.

The catalysed reaction is L-glutamine + H2O = L-glutamate + NH4(+). This chain is Glutaminase, found in Clostridium botulinum (strain Loch Maree / Type A3).